The primary structure comprises 495 residues: Surface E' protein (495 aa).

Residues 224 to 235 (GTLIGLVALIGV) form a helical membrane-spanning segment.

It is found in the cell membrane. The protein is Surface E' protein (cbbE') of Coxiella burnetii.